The chain runs to 588 residues: Aspartate--tRNA ligase (588 aa).

Position 171 (Glu-171) interacts with L-aspartate. Positions Gln-195–Lys-198 are aspartate. Arg-217 lines the L-aspartate pocket. ATP contacts are provided by residues Arg-217–Glu-219 and Gln-226. L-aspartate is bound at residue His-447. Glu-481 provides a ligand contact to ATP. Arg-488 contributes to the L-aspartate binding site. Gly-533–Arg-536 provides a ligand contact to ATP.

This sequence belongs to the class-II aminoacyl-tRNA synthetase family. Type 1 subfamily. Homodimer.

Its subcellular location is the cytoplasm. It catalyses the reaction tRNA(Asp) + L-aspartate + ATP = L-aspartyl-tRNA(Asp) + AMP + diphosphate. Its function is as follows. Catalyzes the attachment of L-aspartate to tRNA(Asp) in a two-step reaction: L-aspartate is first activated by ATP to form Asp-AMP and then transferred to the acceptor end of tRNA(Asp). The chain is Aspartate--tRNA ligase from Aeromonas salmonicida (strain A449).